The sequence spans 368 residues: Flagellar P-ring protein (368 aa).

The N-terminal stretch at 1–24 (MNSIFRKIVFAAFLLLALPQFALA) is a signal peptide.

It belongs to the FlgI family. As to quaternary structure, the basal body constitutes a major portion of the flagellar organelle and consists of four rings (L,P,S, and M) mounted on a central rod.

It localises to the periplasm. The protein localises to the bacterial flagellum basal body. In terms of biological role, assembles around the rod to form the L-ring and probably protects the motor/basal body from shearing forces during rotation. The polypeptide is Flagellar P-ring protein (Geotalea uraniireducens (strain Rf4) (Geobacter uraniireducens)).